The following is an 87-amino-acid chain: HssA/B-like protein 58 (87 aa).

A compositionally biased stretch (polar residues) spans 1-13; the sequence is MTILSAITSISRP. The interval 1–31 is disordered; the sequence is MTILSAITSISRPNKSSKSVISSNGGSSLSM. Over residues 14–31 the composition is skewed to low complexity; the sequence is NKSSKSVISSNGGSSLSM.

The protein belongs to the hssA/B family.

In Dictyostelium discoideum (Social amoeba), this protein is HssA/B-like protein 58 (hssl58).